Here is a 260-residue protein sequence, read N- to C-terminus: MGQKIHPVGFRLGITHEHQSRWFAVPDRYPELLQEDYKLRQYIEQKLGRLAQNNAGISEVRIERKADQIDLEVRTARPGVVVGRGGQGIESLRTGLQGLLGSNRQIRINVVEVQRVDADAYLIAEYIAQQLERRVSFRRVVRQSIQRAQRAGVQGIKIQVSGRLNGAEIARTEWTREGRVPLHTLRADIDYSYCTAKTVYGILGIKVWVFKGEIIPGQEPDPLPPASRDRERDPRDRDREPRRRQQQRRRQQFEDRSNEG.

Positions 39–114 (LRQYIEQKLG…QIRINVVEVQ (76 aa)) constitute a KH type-2 domain. A disordered region spans residues 217–260 (GQEPDPLPPASRDRERDPRDRDREPRRRQQQRRRQQFEDRSNEG). Composition is skewed to basic and acidic residues over residues 227–243 (SRDR…EPRR) and 251–260 (QQFEDRSNEG).

Belongs to the universal ribosomal protein uS3 family. As to quaternary structure, part of the 30S ribosomal subunit. Forms a tight complex with proteins S10 and S14.

Its function is as follows. Binds the lower part of the 30S subunit head. Binds mRNA in the 70S ribosome, positioning it for translation. This chain is Small ribosomal subunit protein uS3, found in Nostoc punctiforme (strain ATCC 29133 / PCC 73102).